A 668-amino-acid chain; its full sequence is Tyrosine-protein phosphatase non-receptor type ptp-2 (668 aa).

SH2 domains lie at 10–113 (NFYY…KKPV) and 134–232 (WWHG…EEPL). The Tyrosine-protein phosphatase domain occupies 264–580 (ISEEFDRLSQ…QFLYKALAFY (317 aa)). The Phosphocysteine intermediate role is filled by C518. The tract at residues 603-668 (PRRLRPTPNA…SSTLLKSTKK (66 aa)) is disordered. 2 stretches are compositionally biased toward low complexity: residues 616-634 (SSARQVTSSRPSSSASSRT) and 652-668 (STSSTSSSSTLLKSTKK).

Belongs to the protein-tyrosine phosphatase family. Non-receptor class 2 subfamily. In terms of tissue distribution, expressed in embryonic cells, developing vulva, body wall muscles, head neurons and gonadal sheath cells.

Its subcellular location is the cytoplasm. The enzyme catalyses O-phospho-L-tyrosyl-[protein] + H2O = L-tyrosyl-[protein] + phosphate. Involved in embryonic and larval development. Plays a role in oogenesis by regulating mpk-1 phosphorylation and oocyte maturation in response to major sperm protein (MSP). During the formation of neuromuscular junctions at the larval stage, negatively regulates membrane protrusion from body wall muscles probably downstream of receptor egl-15. Plays a role in fluid homeostasis probably downstream of receptor egl-15 and adapter soc-1. Promotes vulva induction and negatively regulates fertility probably downstream of receptor let-23. Negatively regulates daf-2-mediated repression of dauer formation. The protein is Tyrosine-protein phosphatase non-receptor type ptp-2 of Caenorhabditis elegans.